Consider the following 501-residue polypeptide: DEAD-box ATP-dependent RNA helicase 36 (501 aa).

Residues 1–68 (MEVDGEARPF…AAAVTEHAGD (68 aa)) form a disordered region. Residues 36 to 46 (EEPPNPSPSPA) are compositionally biased toward pro residues. Over residues 59–68 (AAAVTEHAGD) the composition is skewed to low complexity. A Q motif motif is present at residues 77 to 105 (STFAELGLSQWLVDVCDSLGMRVPTAVQR). One can recognise a Helicase ATP-binding domain in the interval 108 to 281 (IPRALEGRDV…ELSGNNSYFF (174 aa)). An ATP-binding site is contributed by 121–128 (AETGSGKT). Residues 229-232 (DEAD) carry the DEAD box motif. The Helicase C-terminal domain maps to 292-456 (TLKQLYIHVP…AYDGEMRDVN (165 aa)). Residues 473-486 (MADEGHEDKVQARK) are compositionally biased toward basic and acidic residues. Residues 473 to 501 (MADEGHEDKVQARKEQKKRAQERKRKHDE) are disordered. Residues 475 to 501 (DEGHEDKVQARKEQKKRAQERKRKHDE) adopt a coiled-coil conformation. Residues 487–501 (EQKKRAQERKRKHDE) show a composition bias toward basic residues.

The protein belongs to the DEAD box helicase family. DDX49/DBP8 subfamily.

It carries out the reaction ATP + H2O = ADP + phosphate + H(+). This chain is DEAD-box ATP-dependent RNA helicase 36, found in Oryza sativa subsp. japonica (Rice).